Here is a 202-residue protein sequence, read N- to C-terminus: Dephospho-CoA kinase (202 aa).

Positions 4-201 (VVALTGGIAS…QKYLAMSRQN (198 aa)) constitute a DPCK domain. Position 12–17 (12–17 (ASGKTT)) interacts with ATP.

Belongs to the CoaE family.

The protein localises to the cytoplasm. It catalyses the reaction 3'-dephospho-CoA + ATP = ADP + CoA + H(+). Its pathway is cofactor biosynthesis; coenzyme A biosynthesis; CoA from (R)-pantothenate: step 5/5. Its function is as follows. Catalyzes the phosphorylation of the 3'-hydroxyl group of dephosphocoenzyme A to form coenzyme A. The chain is Dephospho-CoA kinase from Vibrio cholerae serotype O1 (strain ATCC 39315 / El Tor Inaba N16961).